Reading from the N-terminus, the 201-residue chain is Basic helix-loop-helix transcription factor scleraxis (201 aa).

Disordered regions lie at residues 1 to 92 and 148 to 177; these read MSFA…NSVN and AFFH…QPKQ. Residues 59-69 are compositionally biased toward gly residues; the sequence is RRAGGGGPGGR. Basic and acidic residues predominate over residues 70-88; it reads PGREPRQRHTANARERDRT. Positions 75-127 constitute a bHLH domain; the sequence is RQRHTANARERDRTNSVNTAFTALRTLIPTEPADRKLSKIETLRLASSYISHL. Residues 157 to 167 are compositionally biased toward pro residues; that stretch reads SPPPPPPPPPA.

As to quaternary structure, efficient DNA binding requires dimerization with another bHLH protein. Dimerizes and binds the E-box consensus sequence with E12.

It is found in the nucleus. Functionally, plays an early essential role in mesoderm formation, as well as a later role in formation of somite-derived chondrogenic lineages. The protein is Basic helix-loop-helix transcription factor scleraxis (SCX) of Homo sapiens (Human).